The sequence spans 178 residues: Interleukin-10 (178 aa).

The first 18 residues, 1–18 (MPGSALLCCLLLLAGVKT), serve as a signal peptide directing secretion. The N-linked (GlcNAc...) asparagine glycan is linked to Asn-29. 2 disulfides stabilise this stretch: Cys-30–Cys-126 and Cys-80–Cys-132. Asn-134 is a glycosylation site (N-linked (GlcNAc...) asparagine).

The protein belongs to the IL-10 family. As to quaternary structure, homodimer. Interacts with IL10RA and IL10RB.

The protein resides in the secreted. Its function is as follows. Major immune regulatory cytokine that acts on many cells of the immune system where it has profound anti-inflammatory functions, limiting excessive tissue disruption caused by inflammation. Mechanistically, IL10 binds to its heterotetrameric receptor comprising IL10RA and IL10RB leading to JAK1 and STAT2-mediated phosphorylation of STAT3. In turn, STAT3 translocates to the nucleus where it drives expression of anti-inflammatory mediators. Targets antigen-presenting cells (APCs) such as macrophages and monocytes and inhibits their release of pro-inflammatory cytokines including granulocyte-macrophage colony-stimulating factor /GM-CSF, granulocyte colony-stimulating factor/G-CSF, IL-1 alpha, IL-1 beta, IL-6, IL-8 and TNF-alpha. Also interferes with antigen presentation by reducing the expression of MHC-class II and co-stimulatory molecules, thereby inhibiting their ability to induce T cell activation. In addition, controls the inflammatory response of macrophages by reprogramming essential metabolic pathways including mTOR signaling. The sequence is that of Interleukin-10 (Il10) from Rattus norvegicus (Rat).